Here is a 95-residue protein sequence, read N- to C-terminus: Aspartyl/glutamyl-tRNA(Asn/Gln) amidotransferase subunit C (95 aa).

Belongs to the GatC family. In terms of assembly, heterotrimer of A, B and C subunits.

It carries out the reaction L-glutamyl-tRNA(Gln) + L-glutamine + ATP + H2O = L-glutaminyl-tRNA(Gln) + L-glutamate + ADP + phosphate + H(+). The catalysed reaction is L-aspartyl-tRNA(Asn) + L-glutamine + ATP + H2O = L-asparaginyl-tRNA(Asn) + L-glutamate + ADP + phosphate + 2 H(+). Functionally, allows the formation of correctly charged Asn-tRNA(Asn) or Gln-tRNA(Gln) through the transamidation of misacylated Asp-tRNA(Asn) or Glu-tRNA(Gln) in organisms which lack either or both of asparaginyl-tRNA or glutaminyl-tRNA synthetases. The reaction takes place in the presence of glutamine and ATP through an activated phospho-Asp-tRNA(Asn) or phospho-Glu-tRNA(Gln). This Dehalococcoides mccartyi (strain ATCC BAA-2266 / KCTC 15142 / 195) (Dehalococcoides ethenogenes (strain 195)) protein is Aspartyl/glutamyl-tRNA(Asn/Gln) amidotransferase subunit C.